The chain runs to 98 residues: MSGDDLDERIETYYVRVRGVVQGVGFRHATVREAHALKLRGWVANLDDGSVEAMLQGSAPQIDRMLAWLRHGPPAAHVTEVTFEEHRTDKRFERFQQH.

The Acylphosphatase-like domain maps to 12 to 98 (TYYVRVRGVV…DKRFERFQQH (87 aa)). Active-site residues include R27 and N45.

Belongs to the acylphosphatase family.

It catalyses the reaction an acyl phosphate + H2O = a carboxylate + phosphate + H(+). This Burkholderia mallei (strain NCTC 10247) protein is Acylphosphatase (acyP).